Consider the following 350-residue polypeptide: Derriere protein (350 aa).

The signal sequence occupies residues M1–S16. The propeptide occupies S17 to R236. 2 N-linked (GlcNAc...) asparagine glycosylation sites follow: N171 and N202. Disulfide bonds link C249/C315, C278/C347, and C282/C349.

The protein belongs to the TGF-beta family. As to quaternary structure, homodimer; disulfide-linked. Also forms heterodimers with other TGF-beta family members including nodal2/nr-2 and bmp4.

It is found in the secreted. Required for posterior mesoderm formation during embryogenesis. Acts indirectly to suppress head formation by altering mesodermal patterning. Also involved in the establishment of left-right axis asymmetry, acting upstream of nodal/nr-1. Can exert long-range effects in the embryo. This Xenopus tropicalis (Western clawed frog) protein is Derriere protein.